The following is a 201-amino-acid chain: Phospholipase A2 inhibitor PIP (201 aa).

The signal sequence occupies residues 1–19 (MKSLQTICLLFIFIARGTS). 8 disulfide bridges follow: Cys-22–Cys-46, Cys-25–Cys-32, Cys-39–Cys-67, Cys-73–Cys-94, Cys-95–Cys-100, Cys-118–Cys-143, Cys-136–Cys-165, and Cys-169–Cys-191. N-linked (GlcNAc...) asparagine glycosylation occurs at Asn-157.

Homohexamer. Glycosylated. Expressed by the liver.

It localises to the secreted. Functionally, inhibits the enzymatic activity of phospholipase A2 (PA2). Binds to the major PLA2 toxin of D.russelli siamensis (Daboiatoxin, AC Q7T2R1, and AC Q7T3T5) at 1-2-fold molar excess of inhibitor to toxin. It exhibits broad spectra in neutralizing the toxicity of various snake venoms and toxins and inhibits the formation of edema in mice. May bind to PLA2 through its proline-rich hydrophobic core region. The chain is Phospholipase A2 inhibitor PIP from Malayopython reticulatus (Reticulate python).